Here is a 210-residue protein sequence, read N- to C-terminus: Putative RING-H2 finger protein ATL50 (210 aa).

Residues 35–55 form a helical membrane-spanning segment; that stretch reads IVLLYITLLSIIFFVAALIHL. An RING-type; atypical zinc finger spans residues 122–164; that stretch reads CAVCLREFTAEDELRLLPKCSHAFHVECIDTWLLTNSTCPLCR. A disordered region spans residues 187-210; the sequence is SDGDNSQDSDSSFMLTDLDDVESK.

It belongs to the RING-type zinc finger family. ATL subfamily.

It is found in the membrane. The enzyme catalyses S-ubiquitinyl-[E2 ubiquitin-conjugating enzyme]-L-cysteine + [acceptor protein]-L-lysine = [E2 ubiquitin-conjugating enzyme]-L-cysteine + N(6)-ubiquitinyl-[acceptor protein]-L-lysine.. The protein operates within protein modification; protein ubiquitination. The sequence is that of Putative RING-H2 finger protein ATL50 (ATL50) from Arabidopsis thaliana (Mouse-ear cress).